The primary structure comprises 1877 residues: Protein TIC 214 (1877 aa).

Transmembrane regions (helical) follow at residues 18-38 (IINSVVVVGLYYGFLTTFSVG), 64-84 (FITGQLMMFISIYYAPLHLAL), 87-107 (PHTITVLVLPYLLFHFFWKNH), 124-144 (LSIQCVFLNNLIFQLFNHFIL), 172-192 (VGWLIGHILFMKWVGLVLFWI), and 221-241 (IFRILLFITCVYYLGRIPSPI). Disordered regions lie at residues 246 to 313 (LKET…GKEK), 644 to 695 (DDFE…NSDR), and 774 to 795 (PEFKTSDSEEKEAKEEEKQKKE). Acidic residues-rich tracts occupy residues 251–268 (ETEEGGESEEETDVEIET), 281–304 (GSTEEDPSLCSEEKEDPDKIDETE), and 645–659 (DFEEQEEEDEEESTE). A compositionally biased stretch (basic and acidic residues) spans 685 to 695 (TSTKDTTNSDR).

Belongs to the TIC214 family. In terms of assembly, part of the Tic complex.

It localises to the plastid. It is found in the chloroplast inner membrane. Its function is as follows. Involved in protein precursor import into chloroplasts. May be part of an intermediate translocation complex acting as a protein-conducting channel at the inner envelope. The sequence is that of Protein TIC 214 from Chloranthus spicatus (Chulantree).